Reading from the N-terminus, the 152-residue chain is Dimethylsulfoniopropionate lyase DddW (152 aa).

The region spanning 69–124 (IAEFGPGHQLRPHRHTPPEFYLGLEGSGIVTIDGVPHEIRAGVALYIPGDAEHGTV) is the Cupin type-2 domain. H83, E87, Y89, and H121 together coordinate Fe cation.

The protein belongs to the non-heme iron-dependent dioxygenase family. Homodimer. It depends on Fe(2+) as a cofactor.

It carries out the reaction S,S-dimethyl-beta-propiothetin = acrylate + dimethyl sulfide + H(+). Its function is as follows. Able to cleave dimethylsulfoniopropionate (DMSP), releasing dimethyl sulfide (DMS) and acrylate. DMS is the principal form by which sulfur is transported from oceans to the atmosphere. The sequence is that of Dimethylsulfoniopropionate lyase DddW from Ruegeria pomeroyi (strain ATCC 700808 / DSM 15171 / DSS-3) (Silicibacter pomeroyi).